We begin with the raw amino-acid sequence, 356 residues long: MQEITPITLNAPLVLLTGAAGWLGGRVAAALTTGLPDAGLLANGSFRVRALVPKGEDISELRKQGMEIATGDLREMQSVRAFVAGAEGAVLIHMAGIIHPKNVAQFEAINTQGTINLVTAAQKAGVRRAVVMSSNSPVGFNPHSDHRFTEESPYDPHAGYGRSKMLMERALRAEVAAGSTMEIVIVRAPWFYGPNQPSRQTLFFKMVKEGKFPIIGSGRNRRSMGYTDNLAQGILLAAVHERAAGDIFWLADETPYTMNEIIEVVGMVLHEDFGMTVKPNPFRLPDIVGGAATILDATLQYAGIYHQKIHVLSEMNKTIACDITKARKVLGYAPKIALREGMQRSVDWCVKNGQSF.

This sequence belongs to the NAD(P)-dependent epimerase/dehydratase family. It depends on NAD(+) as a cofactor. Requires NADP(+) as cofactor.

In terms of biological role, putative nucleotide sugar epimerase/dehydrogenase. This is an uncharacterized protein from Sinorhizobium fredii (strain NBRC 101917 / NGR234).